We begin with the raw amino-acid sequence, 173 residues long: Translation initiation factor IF-3 (173 aa).

It belongs to the IF-3 family. Monomer.

It is found in the cytoplasm. Its function is as follows. IF-3 binds to the 30S ribosomal subunit and shifts the equilibrium between 70S ribosomes and their 50S and 30S subunits in favor of the free subunits, thus enhancing the availability of 30S subunits on which protein synthesis initiation begins. This is Translation initiation factor IF-3 from Methylobacterium radiotolerans (strain ATCC 27329 / DSM 1819 / JCM 2831 / NBRC 15690 / NCIMB 10815 / 0-1).